A 116-amino-acid chain; its full sequence is Propanediol dehydratase-reactivating factor small subunit (116 aa).

Mg(2+) is bound at residue E31.

Belongs to the DdrB/PduH family. As to quaternary structure, forms a heterotetramer PduG(2)/PduH(2). Mg(2+) serves as cofactor.

It is found in the bacterial microcompartment. The catalysed reaction is ATP + H2O = ADP + phosphate + H(+). The protein operates within polyol metabolism; 1,2-propanediol degradation. Small subunit of the propanediol dehydratase-reactivating factor (DDR), which reactivates suicidally inhibited adenosylcobalamin-dependent propanediol dehydratase (diol dehydratase, DDH) found in the bacterial microcompartment (BMC) dedicated to 1,2-propanediol (1,2-PD) degradation. Reactivates inactivated DDH in the presence of ATP, Mg(2+) and free adenosylcobalamin (AdoCbl), by mediating the exchange of the tightly bound damaged cofactor AdoCbl for a free intact one. Functionally, the 1,2-PD-specific bacterial microcompartment (BMC) concentrates low levels of 1,2-PD catabolic enzymes, concentrates volatile reaction intermediates thus enhancing pathway flux and keeps the level of toxic, mutagenic propionaldehyde low. The chain is Propanediol dehydratase-reactivating factor small subunit from Salmonella typhimurium (strain LT2 / SGSC1412 / ATCC 700720).